The primary structure comprises 605 residues: MAGLGPTFPLHRLVWANRHRELEAALHSRKHDIEQEDPQGRTPLELAVTLGNLESVRVLLRHNANVGKESHQGWAVLQEAVSTGDPEMVQLVLQYRDFQRATQRLAGIPELLNKLRQAPDFYVEMKWEFTSWVPLVSKMCPSDVYRVWKRGESLRVDTSLLGFEHMTWQRGRRSFIFRGQEAGALVMEVDHDRQVVHTETLAPALHEPEALLAAMRPSEEHVASRLTSPIVSTHLDTRNVAFERNKCGIWGWRSEKMESVSGYEAKVYSATNVELVTRTRTEHLSDQDKLRNKGGKTPFQSFLGMAQQHSSHTLAPVQQAASPTNPTAISAEEYFDPSFSLESRNIGRPIEMSSKVQRFKATLWLSEEHPLSLGDQVTPIIDLMAISNAHFAKLRDFITLRLPPGFPVKIEIPLFHVLNARITFSNLCGCDEPVSSVCVPNSSSAISASGSPFPCEVDPTVFEVPEGYSVLGAERSEPLRDEDDDLLQFAIQQSLLEAGTEAEQVTVWEALTNTRPGIHPPPRVTVFEEQLQLEQALQESLQLSTESRGPESPQKTPPSPAPPSFEEQLRLALELSSREQEELERRGQQEEDDLQRILQLSLTEH.

UIM domains follow at residues 482–501 and 528–547; these read EDDDLLQFAIQQSLLEAGTE and EEQLQLEQALQESLQLSTES. The span at 538 to 554 shows a compositional bias: low complexity; sequence QESLQLSTESRGPESPQ. The tract at residues 538–605 is disordered; the sequence is QESLQLSTES…RILQLSLTEH (68 aa). Ser552 is subject to Phosphoserine. Phosphothreonine is present on Thr556. Residues 564–575 show a composition bias toward low complexity; the sequence is SFEEQLRLALEL. 2 consecutive UIM domains span residues 564–583 and 589–605; these read SFEEQLRLALELSSREQEEL and QEEDDLQRILQLSLTEH. Over residues 576–589 the composition is skewed to basic and acidic residues; the sequence is SSREQEELERRGQQ.

In terms of assembly, interacts with EGFR (ubiquitinated); the interaction is direct and may regulate EGFR internalization.

It localises to the cell membrane. The protein localises to the late endosome. In terms of biological role, ubiquitin-binding protein that specifically recognizes and binds 'Lys-63'-linked ubiquitin. Does not bind 'Lys-48'-linked ubiquitin. Positively regulates the internalization of ligand-activated EGFR by binding to the Ub moiety of ubiquitinated EGFR at the cell membrane. In Mus musculus (Mouse), this protein is Ankyrin repeat domain-containing protein 13D (Ankrd13d).